The primary structure comprises 240 residues: FAS1 domain-containing protein AN1527 (240 aa).

Residues 1-24 (MRQLSTTALVLFLFFYCSISTAWS) form the signal peptide. The 149-residue stretch at 91-239 (EPTISDVLPK…GEVWVIDGVI (149 aa)) folds into the FAS1 domain.

It is found in the vacuole. The protein is FAS1 domain-containing protein AN1527 of Emericella nidulans (strain FGSC A4 / ATCC 38163 / CBS 112.46 / NRRL 194 / M139) (Aspergillus nidulans).